Consider the following 364-residue polypeptide: Mitoferrin-2 (364 aa).

A compositionally biased stretch (gly residues) spans 1–17 (MELEGRGAGGVAGGPAA). Disordered regions lie at residues 1-28 (MELE…ESAL) and 40-60 (GAGG…PDSG). Residues 18-27 (GPGRSPGESA) show a composition bias toward low complexity. Solcar repeat units follow at residues 70–158 (ATVT…LKKT), 168–252 (NSHI…LQEH), and 259–352 (YNPS…FKYL). A run of 6 helical transmembrane segments spans residues 72-91 (VTTH…CVMY), 133-152 (GLNV…FACY), 170-189 (HIAN…AAMN), 227-246 (SYTT…FMTY), 261-280 (PSSH…AATT), and 327-346 (GVQA…WSVY).

Belongs to the mitochondrial carrier (TC 2.A.29) family. As to expression, ubiquitous. Expressed in placenta, lung, kidney, pancreas, liver, brain, skeletal muscle and heart.

The protein localises to the mitochondrion inner membrane. The catalysed reaction is Fe(2+)(in) = Fe(2+)(out). Mitochondrial iron transporter that mediates iron uptake. Probably required for heme synthesis of hemoproteins and Fe-S cluster assembly in non-erythroid cells. This chain is Mitoferrin-2 (SLC25A28), found in Homo sapiens (Human).